Reading from the N-terminus, the 142-residue chain is Chorion class A protein Ld12 (142 aa).

The signal sequence occupies residues Met1–Ser18.

It belongs to the chorion protein family.

In terms of biological role, this protein is one of many from the eggshell of the gypsy moth. This Lymantria dispar (Gypsy moth) protein is Chorion class A protein Ld12.